Consider the following 113-residue polypeptide: Large ribosomal subunit protein uL24 (113 aa).

The interval 48–70 (HRKRVTNDKGTSSGGLEKRESPM) is disordered.

Belongs to the universal ribosomal protein uL24 family. In terms of assembly, part of the 50S ribosomal subunit.

Its function is as follows. One of two assembly initiator proteins, it binds directly to the 5'-end of the 23S rRNA, where it nucleates assembly of the 50S subunit. Functionally, one of the proteins that surrounds the polypeptide exit tunnel on the outside of the subunit. The protein is Large ribosomal subunit protein uL24 of Tropheryma whipplei (strain TW08/27) (Whipple's bacillus).